Reading from the N-terminus, the 314-residue chain is NADH-ubiquinone oxidoreductase chain 2 (314 aa).

The next 9 helical transmembrane spans lie at 13 to 35 (LGVMLIGTILSVSSEELVGVWLG), 61 to 80 (YFVVQSTGSILMLVGFVSLM), 85 to 107 (VSGLVMSTAXTVLKSGVFPLHSW), 117 to 139 (WLASGLMLTWQKVAPLVFLSMIL), 144 to 166 (LWVVIVSMAGIGAVGGLNQNSVR), 189 to 209 (VVFVGYFAVYSLSVGLFFYGC), 224 to 244 (AASGMGLLMLMGMPPFLGFLA), 246 to 266 (VLVFLMSGSPVIVACIMGSVI), and 294 to 314 (IWSLVICMNIMGGALILVSFI).

This sequence belongs to the complex I subunit 2 family.

It localises to the mitochondrion inner membrane. The enzyme catalyses a ubiquinone + NADH + 5 H(+)(in) = a ubiquinol + NAD(+) + 4 H(+)(out). Functionally, core subunit of the mitochondrial membrane respiratory chain NADH dehydrogenase (Complex I) that is believed to belong to the minimal assembly required for catalysis. Complex I functions in the transfer of electrons from NADH to the respiratory chain. The immediate electron acceptor for the enzyme is believed to be ubiquinone. In Mytilus edulis (Blue mussel), this protein is NADH-ubiquinone oxidoreductase chain 2 (ND2).